The chain runs to 431 residues: Glutamate-1-semialdehyde 2,1-aminomutase (431 aa).

K269 is modified (N6-(pyridoxal phosphate)lysine).

The protein belongs to the class-III pyridoxal-phosphate-dependent aminotransferase family. HemL subfamily. Homodimer. Pyridoxal 5'-phosphate is required as a cofactor.

It localises to the cytoplasm. The enzyme catalyses (S)-4-amino-5-oxopentanoate = 5-aminolevulinate. The protein operates within porphyrin-containing compound metabolism; protoporphyrin-IX biosynthesis; 5-aminolevulinate from L-glutamyl-tRNA(Glu): step 2/2. It participates in porphyrin-containing compound metabolism; chlorophyll biosynthesis. In Chlorobaculum parvum (strain DSM 263 / NCIMB 8327) (Chlorobium vibrioforme subsp. thiosulfatophilum), this protein is Glutamate-1-semialdehyde 2,1-aminomutase.